A 234-amino-acid polypeptide reads, in one-letter code: Glucosamine-6-phosphate deaminase (234 aa).

Asp-63 functions as the Proton acceptor; for enolization step in the catalytic mechanism. The active-site For ring-opening step is the Asn-129. His-131 acts as the Proton acceptor; for ring-opening step in catalysis. The active-site For ring-opening step is the Glu-136.

This sequence belongs to the glucosamine/galactosamine-6-phosphate isomerase family. NagB subfamily.

It catalyses the reaction alpha-D-glucosamine 6-phosphate + H2O = beta-D-fructose 6-phosphate + NH4(+). It functions in the pathway amino-sugar metabolism; N-acetylneuraminate degradation; D-fructose 6-phosphate from N-acetylneuraminate: step 5/5. Catalyzes the reversible isomerization-deamination of glucosamine 6-phosphate (GlcN6P) to form fructose 6-phosphate (Fru6P) and ammonium ion. In Listeria welshimeri serovar 6b (strain ATCC 35897 / DSM 20650 / CCUG 15529 / CIP 8149 / NCTC 11857 / SLCC 5334 / V8), this protein is Glucosamine-6-phosphate deaminase.